Here is a 671-residue protein sequence, read N- to C-terminus: Amidase chry2 (671 aa).

Cys-2 serves as the catalytic Nucleophile. A Glutamine amidotransferase type-2 domain is found at 2–220 (CGISAFITHP…PGHYLICRPN (219 aa)). One can recognise an Asparagine synthetase domain in the interval 251–639 (VRERLLEAVR…TQDAMDGAFN (389 aa)).

It belongs to the asparagine synthetase family.

It participates in pigment biosynthesis. Functionally, amidase; part of the gene cluster that mediates the biosynthesis of the yellow pigment chrysogine. Pyruvic acid and anthranilic acid are likely substrates for the nonribosomal peptide synthetase chry1/NRPS14, with pyruvic acid adenylated by the first A domain and anthranilic acid by the second. If pyruvic acid and anthranilic acid are merged and released from chry1/NRPS14 by hydrolysis, a subsequent amidation would lead to 2-pyruvoylaminobenzamide. This process is probably catalyzed by the amidotransferase chry2 using glutamine as amino donor. The dehydrogenase chry5 that has a terminal berberine bridge domain for C-N cyclization could catalyze the cyclization of 2-pyruvoylaminobenzamide to yield acetyl-4(3H)-quinazolidinone. A final reduction of acetyl-4(3H)-quinazolidinone catalyzed by the oxidoreductase chry4 would result in chrysogine. The polypeptide is Amidase chry2 (Gibberella zeae (strain ATCC MYA-4620 / CBS 123657 / FGSC 9075 / NRRL 31084 / PH-1) (Wheat head blight fungus)).